The following is a 368-amino-acid chain: GDP-fucose transporter 1 (368 aa).

9 consecutive transmembrane segments (helical) span residues 64-84 (LSTI…LVFL), 98-118 (LFIT…MTSI), 141-161 (VLPV…CLEY), 166-186 (FYQV…YIVL), 195-215 (TMAC…EVNF), 217-237 (WLGI…SIAV), 251-271 (LSIY…LVSG), 287-307 (FWFY…SVFM), and 332-352 (AVVF…LLVI).

It belongs to the TPT transporter family. SLC35C subfamily.

The protein resides in the golgi apparatus membrane. The catalysed reaction is GMP(out) + GDP-beta-L-fucose(in) = GMP(in) + GDP-beta-L-fucose(out). Antiporter specific for GDP-l-fucose and depending on the concomitant reverse transport of GMP. Involved in GDP-fucose import from the cytoplasm into the Golgi lumen. This is GDP-fucose transporter 1 (slc35c1) from Dictyostelium discoideum (Social amoeba).